The sequence spans 2336 residues: Voltage-dependent N-type calcium channel subunit alpha-1B (2336 aa).

Residues 1–37 (MVRFGDELGGRYGGTGGGERARGGGAGGAGGPGQGGL) form a disordered region. The Cytoplasmic portion of the chain corresponds to 1-90 (MVRFGDELGG…DNVVRKYAKR (90 aa)). Positions 10 to 37 (GRYGGTGGGERARGGGAGGAGGPGQGGL) are enriched in gly residues. The residue at position 22 (Arg22) is an Omega-N-methylarginine. The I repeat unit spans residues 82–359 (NVVRKYAKRI…LVLGVLSGEF (278 aa)). Residues 91–114 (ITEWPPFEYMILATIIANCIVLAL) form a helical membrane-spanning segment. Residues 115 to 131 (EQHLPDGDKTPMSERLD) lie on the Extracellular side of the membrane. Residues 132–152 (DTEPYFIGIFCFEAGIKIIAL) traverse the membrane as a helical segment. The Cytoplasmic segment spans residues 153–163 (GFVFHKGSYLR). A helical membrane pass occupies residues 164–182 (NGWNVMDFVVVLTEILATA). At 183 to 187 (GTDFD) the chain is on the extracellular side. Residues 188–211 (LRTLRAVRVLRPLKLVSGIPSLQV) form a helical membrane-spanning segment. Residues 212–221 (VLKSIMKAMV) lie on the Cytoplasmic side of the membrane. Residues 222-244 (PLLQIGLLLFFAILMFAIIGLEF) form a helical membrane-spanning segment. At 245 to 331 (YMGKFHKACF…NTNDAAGNTW (87 aa)) the chain is on the extracellular side. Asn256 carries an N-linked (GlcNAc...) asparagine glycan. The helical transmembrane segment at 332–356 (NWLYFIPLIIIGSFFMLNLVLGVLS) threads the bilayer. Residues 357–483 (GEFAKERERV…FLIRRMVKAQ (127 aa)) are Cytoplasmic-facing. A binding to the beta subunit region spans residues 379–396 (QQIERELNGYLEWIFKAE). Ser411 carries the phosphoserine modification. 452–459 (ASLKSGKT) serves as a coordination point for ATP. Residues 469–713 (EKMFRFLIRR…VFLAIAVDNL (245 aa)) form an II repeat. A helical transmembrane segment spans residues 484 to 502 (SFYWVVLCVVALNTLCVAM). The Extracellular portion of the chain corresponds to 503–512 (VHYNQPQRLT). The helical transmembrane segment at 513–535 (TALYFAEFVFLGLFLTEMSLKMY) threads the bilayer. Residues 536-545 (GLGPRSYFRS) are Cytoplasmic-facing. Ser545 contacts a 1,2-diacyl-sn-glycero-3-phospho-(1D-myo-inositol-4,5-bisphosphate). Residues 546 to 567 (SFNCFDFGVIVGSIFEVVWAAI) traverse the membrane as a helical segment. Over 568–574 (KPGTSFG) the chain is Extracellular. The chain crosses the membrane as a helical span at residues 575-587 (ISVLRALRLLRIF). 2 residues coordinate a 1,2-diacyl-sn-glycero-3-phospho-(1D-myo-inositol-4,5-bisphosphate): Arg585 and Lys588. Over 588 to 605 (KVTKYWNSLRNLVVSLLN) the chain is Cytoplasmic. The chain crosses the membrane as a helical span at residues 606–631 (SMKSIISLLFLLFLFIVVFALLGMQL). Residues 632 to 683 (FGGQFNFQDETPTTNFDTFPAAILTVFQILTGEDWNAVMYHGIESQGGVSKG) lie on the Extracellular side of the membrane. Residues 684–710 (MFSSFYFIVLTLFGNYTLLNVFLAIAV) form a helical membrane-spanning segment. The Cytoplasmic portion of the chain corresponds to 711 to 1149 (DNLANAQELT…FCHYIVTMRY (439 aa)). Residues Ser746, Ser749, and Ser784 each carry the phosphoserine modification. 2 disordered regions span residues 800–1021 (YAST…HQPK) and 1051–1076 (EQPEDADNQRNVTRMGSQPSDPSTTV). Composition is skewed to basic and acidic residues over residues 806–827 (VRPDMKTHMDRPLVVEPGRDGL), 870–891 (EQDRTDCPKAESTETGAREERA), 920–930 (GSPEEATEREP), 938–948 (HAQDSSKEGKE), 970–981 (GPRETENSEEPT), and 996–1021 (PPEREVAEKESNVVEGDKETRNHQPK). Residues 1059–1076 (QRNVTRMGSQPSDPSTTV) show a composition bias toward polar residues. Ser1067 is modified (phosphoserine). The III repeat unit spans residues 1135–1421 (NLLRRFCHYI…IFVALIIITF (287 aa)). Residues 1150–1168 (FEMVILVVIALSSIALAAE) traverse the membrane as a helical segment. At 1169–1176 (DPVRTDSF) the chain is on the extracellular side. The chain crosses the membrane as a helical span at residues 1177–1201 (RNNALKYMDYIFTGVFTFEMVIKMI). Topologically, residues 1202–1215 (DLGLLLHPGAYFRD) are cytoplasmic. Residues 1216–1240 (LWNILDFIVVSGALVAFAFSSFMGG) form a helical membrane-spanning segment. At 1241–1246 (SKGKDI) the chain is on the extracellular side. Residues 1247–1267 (NTIKSLRVLRVLRPLKTIKRL) form a helical membrane-spanning segment. Residues 1268–1285 (PKLKAVFDCVVNSLKNVL) lie on the Cytoplasmic side of the membrane. Residues 1286–1305 (NILIVYMLFMFIFAVIAVQL) traverse the membrane as a helical segment. The Extracellular segment spans residues 1306–1392 (FKGKFFYCTD…EQGPSPGFRM (87 aa)). Residues 1393-1418 (ELSIFYVVYFVVFPFFFVNIFVALII) traverse the membrane as a helical segment. At 1419–1473 (ITFQEQGDKVMSECSLEKNERACIDFAISAKPLTRYMPQNKQSFQYKTWTFVVSP) the chain is on the cytoplasmic side. The stretch at 1458–1711 (NKQSFQYKTW…LFVAVIMDNF (254 aa)) is one IV repeat. Residues 1474–1492 (PFEYFIMAMIALNTVVLMM) traverse the membrane as a helical segment. Residues 1493–1500 (KFYDAPYE) are Extracellular-facing. Residues 1501–1525 (YELMLKCLNIVFTSMFSLECILKII) traverse the membrane as a helical segment. Residues 1526-1535 (AFGVLNYFRD) lie on the Cytoplasmic side of the membrane. The helical transmembrane segment at 1536 to 1557 (AWNVFDFVTVLGSITDILVTEI) threads the bilayer. The Extracellular portion of the chain corresponds to 1558 to 1563 (ANNFIN). Asn1563 carries an N-linked (GlcNAc...) asparagine glycan. A helical transmembrane segment spans residues 1564 to 1582 (LSFLRLFRAARLIKLCRQG). Over 1583 to 1601 (YTIRILLWTFVQSFKALPY) the chain is Cytoplasmic. Residues 1602–1621 (VCLLIAMLFFIYAIIGMQVF) traverse the membrane as a helical segment. The Extracellular segment spans residues 1622 to 1683 (GNIALDDGTS…ANASECGSDF (62 aa)). Asn1675 is a glycosylation site (N-linked (GlcNAc...) asparagine). The helical transmembrane segment at 1684 to 1707 (AYFYFVSFIFLCSFLMLNLFVAVI) threads the bilayer. Over 1708–2336 (MDNFEYLTRD…YHHPDQDHWC (629 aa)) the chain is Cytoplasmic. One can recognise an EF-hand domain in the interval 1724-1759 (HHLDEFIRVWAEYDPAACGRISYNDMFEMLKHMSPP). The Ca(2+) site is built by Asp1737, Arg1743, and Asp1748. The disordered stretch occupies residues 1981 to 2202 (TLRGPDGEPQ…TPRPSITYKT (222 aa)). Positions 2048–2062 (SHHHHHRCHRRRDKK) are enriched in basic residues. Ser2065 carries the phosphoserine modification. Basic and acidic residues predominate over residues 2097–2113 (CRRERKQERGRSQERRQ). The span at 2161 to 2177 (GSGSVNGSPLMSTSGAS) shows a compositional bias: polar residues. Phosphoserine is present on residues Ser2221, Ser2230, and Ser2253.

The protein belongs to the calcium channel alpha-1 subunit (TC 1.A.1.11) family. CACNA1B subfamily. In terms of assembly, multisubunit complex consisting of alpha-1, alpha-2, beta and delta subunits in a 1:1:1:1 ratio. The channel activity is directed by the pore-forming and voltage-sensitive alpha-1 subunit. In many cases, this subunit is sufficient to generate voltage-sensitive calcium channel activity. The auxiliary subunits beta and alpha-2/delta linked by a disulfide bridge regulate the channel activity. Interacts with RIMS1. Interacts with FMR1 (via C-terminus); this interaction induces a decrease in the number of presynaptic functional CACNA1B channels at the cell surface. Post-translationally, phosphorylated in vitro by CaM-kinase II, PKA, PKC and CGPK. As to expression, central nervous system.

It is found in the membrane. The catalysed reaction is Ca(2+)(in) = Ca(2+)(out). Is specifically blocked by omega-conotoxin GVIA. Is specifically blocked by omega-conotoxin MVIIA (ziconotide). Is insensitive to dihydropyridines (DHP). Voltage-sensitive calcium channels (VSCC) mediate the entry of calcium ions into excitable cells and are also involved in a variety of calcium-dependent processes, including muscle contraction, hormone or neurotransmitter release, gene expression, cell motility, cell division and cell death. This alpha-1B subunit gives rise to N-type calcium currents. N-type calcium channels belong to the 'high-voltage activated' (HVA) group. They are involved in pain signaling. Calcium channels containing alpha-1B subunit may play a role in directed migration of immature neurons. Mediates Ca(2+) release probability at hippocampal neuronal soma and synaptic terminals. This chain is Voltage-dependent N-type calcium channel subunit alpha-1B (Cacna1b), found in Rattus norvegicus (Rat).